The chain runs to 138 residues: ATP synthase epsilon chain 1 (138 aa).

This sequence belongs to the ATPase epsilon chain family. As to quaternary structure, F-type ATPases have 2 components, CF(1) - the catalytic core - and CF(0) - the membrane proton channel. CF(1) has five subunits: alpha(3), beta(3), gamma(1), delta(1), epsilon(1). CF(0) has three main subunits: a, b and c.

It is found in the cell inner membrane. In terms of biological role, produces ATP from ADP in the presence of a proton gradient across the membrane. This Syntrophotalea carbinolica (strain DSM 2380 / NBRC 103641 / GraBd1) (Pelobacter carbinolicus) protein is ATP synthase epsilon chain 1.